The primary structure comprises 135 residues: Large ribosomal subunit protein bL17 (135 aa).

It belongs to the bacterial ribosomal protein bL17 family. Part of the 50S ribosomal subunit. Contacts protein L32.

This chain is Large ribosomal subunit protein bL17, found in Rhodopseudomonas palustris (strain BisB18).